The following is a 442-amino-acid chain: Meiosis-specific with OB domain-containing protein (442 aa).

The segment at residues 167–272 (IINVLAAVKS…EANILLNFIR (106 aa)) is a DNA-binding region (OB).

Belongs to the MEIOB family. Component of a multiprotein complex with RPA2 and SPATA22. Interacts with SPATA22. Interacts with the complex BRME1:HSF2BP:BRCA2. As to expression, in fetal gonads, specifically expressed in the ovary starting at the 14th weeks post fertilization. In the adult, restricted to testis.

The protein resides in the cytoplasm. The protein localises to the nucleus. It localises to the chromosome. In terms of biological role, single-stranded DNA-binding protein required for homologous recombination in meiosis I. Required for double strand breaks (DSBs) repair and crossover formation and promotion of faithful and complete synapsis. Not required for the initial loading of recombinases but required to maintain a proper number of RAD51 and DMC1 foci after the zygotene stage. May act by ensuring the stabilization of recombinases, which is required for successful homology search and meiotic recombination. Displays Single-stranded DNA 3'-5' exonuclease activity in vitro. The polypeptide is Meiosis-specific with OB domain-containing protein (Homo sapiens (Human)).